The following is a 696-amino-acid chain: MMGPEDAGACSGRNAELLPVPGPMGQDGKTVPATSGFSGGAVAAEPPEEAGEEEAPPPRQLLQRYLAAAAGPLKPGLGGAEAEEAAAAAVPAARGSGMTNGDSGFLLRQDRRGPEEARRRRTCGRPCLLEPADEGVDGAGGLDDWAAPLEDPLRSCCLAAGDTDDPDPAAATPAGRAVESAEPSLGLPDARFGSRNTFEVSRRQSAGDLLPSAGPSAPLPAAEQGPGGTTARARRSGGFADFFARNLFPKRTKELKSVVHSAPGWKLFGKVPPRENLQKTSKIIQQEYEARTGRTCKAAPQSSRRKSFALEPLSTTALILEDRPPNLPAKSVEEALRHRQEYDEMVAEAKKREIKEAHKRKRIMKERFKQEESIASAMVIWINEILPNWEVMRSTRRVRELWWQGLPPSVRGKVWSLAVGNELNITPELYEIFLSRAKERWKSFSESSSENDTEGLSVADREASLELIKLDISRTFPSLYIFQKGGPYHDVLHSILGAYTCYRPDVGYVQGMSFIAAVLILNLEEADAFIAFANLLNKPCQLAFFRVDHSMMLKYFATFEVFFEENLSKLFLHFKSYNLTPDIYLIDWIFTLYSKSLPLDLACRVWDVFCRDGEEFLFRTGLGILRLYEDILLQMDFIHIAQFLTKLPEDITSEKLFSCIAAIQMQNSTKKWTQVFASVAKDIKEGDKNTSPALKS.

Met-1 is subject to N-acetylmethionine. 3 disordered regions span residues 1 to 59, 91 to 121, and 156 to 234; these read MMGP…PPPR, PAAR…RRRR, and CCLA…ARAR. Residues 46-55 are compositionally biased toward acidic residues; sequence PPEEAGEEEA. The segment covering 108–118 has biased composition (basic and acidic residues); the sequence is RQDRRGPEEAR. Ser-205 is subject to Phosphoserine. The segment covering 209–222 has biased composition (low complexity); the sequence is LLPSAGPSAPLPAA. Ser-236 carries the phosphoserine modification. Positions 330–373 form a coiled coil; it reads KSVEEALRHRQEYDEMVAEAKKREIKEAHKRKRIMKERFKQEES. Residues 405-613 form the Rab-GAP TBC domain; the sequence is GLPPSVRGKV…RVWDVFCRDG (209 aa). Phosphoserine is present on Ser-668. Thr-669 carries the post-translational modification Phosphothreonine.

In terms of assembly, interacts with RAB11A; this interaction recruits TBC1D12 to RAB11A-positive recycling endosomes.

It is found in the endosome. Its function is as follows. RAB11A-binding protein that plays a role in neurite outgrowth. The protein is TBC1 domain family member 12 (Tbc1d12) of Mus musculus (Mouse).